A 558-amino-acid chain; its full sequence is Dihydroxy-acid dehydratase (558 aa).

Position 50 (Cys-50) interacts with [2Fe-2S] cluster. Asp-82 is a Mg(2+) binding site. [2Fe-2S] cluster is bound at residue Cys-123. The Mg(2+) site is built by Asp-124 and Lys-125. Lys-125 is subject to N6-carboxylysine. Position 195 (Cys-195) interacts with [2Fe-2S] cluster. Glu-447 is a binding site for Mg(2+). Ser-472 (proton acceptor) is an active-site residue.

It belongs to the IlvD/Edd family. In terms of assembly, homodimer. [2Fe-2S] cluster is required as a cofactor. The cofactor is Mg(2+).

It carries out the reaction (2R)-2,3-dihydroxy-3-methylbutanoate = 3-methyl-2-oxobutanoate + H2O. It catalyses the reaction (2R,3R)-2,3-dihydroxy-3-methylpentanoate = (S)-3-methyl-2-oxopentanoate + H2O. It functions in the pathway amino-acid biosynthesis; L-isoleucine biosynthesis; L-isoleucine from 2-oxobutanoate: step 3/4. Its pathway is amino-acid biosynthesis; L-valine biosynthesis; L-valine from pyruvate: step 3/4. In terms of biological role, functions in the biosynthesis of branched-chain amino acids. Catalyzes the dehydration of (2R,3R)-2,3-dihydroxy-3-methylpentanoate (2,3-dihydroxy-3-methylvalerate) into 2-oxo-3-methylpentanoate (2-oxo-3-methylvalerate) and of (2R)-2,3-dihydroxy-3-methylbutanoate (2,3-dihydroxyisovalerate) into 2-oxo-3-methylbutanoate (2-oxoisovalerate), the penultimate precursor to L-isoleucine and L-valine, respectively. This is Dihydroxy-acid dehydratase from Saccharolobus islandicus (strain Y.N.15.51 / Yellowstone #2) (Sulfolobus islandicus).